Consider the following 276-residue polypeptide: Triple specificity protein phosphatase PtpB (276 aa).

Cys-160 acts as the Phosphocysteine intermediate in catalysis. Positions 232 to 250 (LGVRAEYLAAARQTIDETY) are UIM-like region.

Belongs to the protein-tyrosine phosphatase family. As to quaternary structure, interacts (via UIM-like region) with host ubiquitin; activating the phosphatidylinositol phosphate phosphatase activity.

The protein localises to the secreted. Its subcellular location is the host cytoplasm. The protein resides in the host cell membrane. It carries out the reaction O-phospho-L-tyrosyl-[protein] + H2O = L-tyrosyl-[protein] + phosphate. The catalysed reaction is O-phospho-L-seryl-[protein] + H2O = L-seryl-[protein] + phosphate. The enzyme catalyses O-phospho-L-threonyl-[protein] + H2O = L-threonyl-[protein] + phosphate. It catalyses the reaction 1,2-dioctanoyl-sn-glycero-3-phospho-(1-D-myo-inositol-3-phosphate) + H2O = 1,2-dioctanoyl-sn-glycero-3-phospho-(1D-myo-inositol) + phosphate. It carries out the reaction 1,2-dioctanoyl-sn-glycero-3-phospho-(1-D-myo-inositol-4-phosphate) + H2O = 1,2-dioctanoyl-sn-glycero-3-phospho-(1D-myo-inositol) + phosphate. The catalysed reaction is 1,2-dioctanoyl-sn-glycero-3-phospho-(1D-myo-inositol-5-phosphate) + H2O = 1,2-dioctanoyl-sn-glycero-3-phospho-(1D-myo-inositol) + phosphate. Binding to host ubiquitin is required to activate the phosphatidylinositol phosphate phosphatase activity. Phosphatase activity is inhibited by sodium orthovanadate, a specific inhibitor of tyrosine phosphatases, but not by okadaic acid, an inhibitor of serine/threonine phosphatases. Inhibition of the enzyme reduces mycobacterial survival in infected macrophages. Inhibitors also enhance killing efficacy by first-line antibiotics. Functionally, essential virulence factor that promotes mycobacterial survival within host macrophages. Acts as a phosphatase that possesses triple substrate specificity toward phosphotyrosine, phosphoserine/threonine and phosphoinositides. Supports mycobacteria survival during infection by modulating the normal host signaling pathways, attenuating the bactericidal immune responses and promoting the host cell survival. Inhibits host pyroptosis by disrupting the membrane localization of host gasdermin-D (GSDMD): acts by catalyzing dephosphorylation of phosphatidylinositol (4,5)-bisphosphate and phosphatidylinositol 4-phosphate, thereby inhibiting the membrane targeting of GSDMD and subsequent cytokine release and pyroptosis. Inhibits host inflammatory responses and apoptosis through impeding the NF-kappa-B and MAPK signal pathways and TP53/p53 expression in the macrophage. Blocks the IL6/IL-6 production by down-regulating ERK1/2, p38 and p65 activity. Prevents macrophage cell death by activating the Akt pathway and blocking caspase 3 activity. Reduces the expression of iNOS in activated macrophages and inhibits the generation of destroying reactive nitrogen intermediate NO. This chain is Triple specificity protein phosphatase PtpB, found in Mycobacterium tuberculosis (strain ATCC 25618 / H37Rv).